A 260-amino-acid chain; its full sequence is GDNF family receptor alpha-4 (260 aa).

Positions 1-23 (MAHCMESALLLLLLLGSASFTDG) are cleaved as a signal peptide. Residue Asn184 is glycosylated (N-linked (GlcNAc...) asparagine). A lipid anchor (GPI-anchor amidated threonine) is attached at Thr237. A propeptide spans 238–260 (AGCCFPRVSWLYALTALALQALL) (removed in mature form).

It belongs to the GDNFR family. In terms of assembly, interacts with ARTN ligand and RET: forms a 2:2:2 ternary complex composed of ARTN ligand, GFRA3 and RET receptor. Interacts with SORL1. As to expression, expressed in many tissues including adrenal medulla, brain neurons, with highest levels in the cerebral cortex and hippocampus. Moderate levels found in the gut circular muscle and myenteric ganglia as well as in other peripheral ganglia, including the sensory dorsal root and trigeminal as well as superior cervical and sympathetic chain ganglia. Isoform a1, isoform a2, isoform b1 and isoform b2 are exclusively found in the thyroid, parthyroid and pituitary glands.

The protein localises to the cell membrane. The protein resides in the secreted. In terms of biological role, receptor for persephin (PSPN), a growth factor that exhibits neurotrophic activity on mesencephalic dopaminergic and motor neurons. Acts by binding to its coreceptor, GFRA4, leading to autophosphorylation and activation of the RET receptor. May be important in C-cell development and, in the postnatal development of the adrenal medulla. In Mus musculus (Mouse), this protein is GDNF family receptor alpha-4 (Gfra4).